The chain runs to 130 residues: Cytochrome b-c1 complex subunit 7 (130 aa).

It belongs to the UQCRB/QCR7 family. As to quaternary structure, component of the ubiquinol-cytochrome c oxidoreductase (cytochrome b-c1 complex, complex III, CIII), a multisubunit enzyme composed of 3 respiratory subunits cytochrome b, cytochrome c1 and Rieske protein, 2 core protein subunits, and additional low-molecular weight protein subunits. The complex exists as an obligatory dimer and forms supercomplexes (SCs) in the inner mitochondrial membrane with cytochrome c oxidase (complex IV, CIV).

It localises to the mitochondrion inner membrane. Functionally, component of the ubiquinol-cytochrome c oxidoreductase, a multisubunit transmembrane complex that is part of the mitochondrial electron transport chain which drives oxidative phosphorylation. The respiratory chain contains 3 multisubunit complexes succinate dehydrogenase (complex II, CII), ubiquinol-cytochrome c oxidoreductase (cytochrome b-c1 complex, complex III, CIII) and cytochrome c oxidase (complex IV, CIV), that cooperate to transfer electrons derived from NADH and succinate to molecular oxygen, creating an electrochemical gradient over the inner membrane that drives transmembrane transport and the ATP synthase. The cytochrome b-c1 complex catalyzes electron transfer from ubiquinol to cytochrome c, linking this redox reaction to translocation of protons across the mitochondrial inner membrane, with protons being carried across the membrane as hydrogens on the quinol. In the process called Q cycle, 2 protons are consumed from the matrix, 4 protons are released into the intermembrane space and 2 electrons are passed to cytochrome c. This chain is Cytochrome b-c1 complex subunit 7 (UBCRBP), found in Echinococcus multilocularis (Fox tapeworm).